The primary structure comprises 391 residues: uncharacterized protein (391 aa).

WD repeat units lie at residues 137 to 179 (VNDI…PILA) and 182 to 222 (PLSS…SAEE).

It localises to the cytoplasm. Its subcellular location is the nucleus. This is an uncharacterized protein from Schizosaccharomyces pombe (strain 972 / ATCC 24843) (Fission yeast).